We begin with the raw amino-acid sequence, 75 residues long: UPF0352 protein PMI0824 (75 aa).

It belongs to the UPF0352 family.

The protein is UPF0352 protein PMI0824 of Proteus mirabilis (strain HI4320).